A 362-amino-acid polypeptide reads, in one-letter code: MLCVNVELRERSYPIHIGMGLLSEPQVYPLKKGDKVMIVTNPTVAQYYLSSITDTLEKIGCSVENVQLPEGEQYKTLESLDLIFTALLKANHGRDTSIIALGGGVIGDIAGYAAASYQRGVRFIQIPTTLLAQVDSSVGGKTAVNHKLGKNMIGAFYQPCAVIIDTLTLTTLPKREIHAGLAEVIKYGAILDDEFFTWLEKHITNLVALEQQYLQQCIARCCQIKADVVTRDETEKGERALLNLGHTFGHAIETHLGYGNWLHGEAVATGMMIAAVLSNKLGDLSLNDVTRLEKLLTQADLPTASPDTMKAEDYLPHMMRDKKVLAGKLRLVLLKSLGQAYVATDTDKEYVLDAIRTCSKKS.

NAD(+) is bound by residues 70–75 (EGEQYK), 104–108 (GVIGD), 128–129 (TT), lysine 141, lysine 150, and 168–171 (TLTT). Zn(2+) contacts are provided by glutamate 183, histidine 246, and histidine 263.

The protein belongs to the sugar phosphate cyclases superfamily. Dehydroquinate synthase family. Requires Co(2+) as cofactor. It depends on Zn(2+) as a cofactor. NAD(+) serves as cofactor.

It localises to the cytoplasm. The enzyme catalyses 7-phospho-2-dehydro-3-deoxy-D-arabino-heptonate = 3-dehydroquinate + phosphate. The protein operates within metabolic intermediate biosynthesis; chorismate biosynthesis; chorismate from D-erythrose 4-phosphate and phosphoenolpyruvate: step 2/7. In terms of biological role, catalyzes the conversion of 3-deoxy-D-arabino-heptulosonate 7-phosphate (DAHP) to dehydroquinate (DHQ). The protein is 3-dehydroquinate synthase of Histophilus somni (strain 2336) (Haemophilus somnus).